Consider the following 708-residue polypeptide: Outer capsid protein mu-1 (708 aa).

Residue Gly2 is the site of N-myristoyl glycine; by host attachment. 8 N-linked (GlcNAc...) asparagine; by host glycosylation sites follow: Asn3, Asn12, Asn81, Asn110, Asn458, Asn482, Asn528, and Asn659. The segment at 675 to 708 is disordered; the sequence is PKPDCPTSGDSGESSNRRVKRDSYAGVVKRGYTR.

The protein belongs to the orthoreovirus mu-1 protein family. As to quaternary structure, heterohexamer of three sigma-3 and three Mu-1 proteins. In terms of processing, cleaved during the endosomal proteolytic disassembly of the outer capsid. Mu-1 is proteolytically cleaved into mu-1N and mu-1C during the maturation step to generate the ISVP. Cleavage of mu-1 to mu-1C is dependent on myristoylation and binding to sigma-3 protein. Mu-1C is further cleaved into delta (59 kDa), and phi (13 kDa) segments during entry into the host cell cytoplasm. Post-translationally, mu-1 and mu-1N are N-terminally myristoylated. This acylation is essential for the membrane fusion activity.

It is found in the virion. The protein resides in the host cell membrane. It localises to the host endoplasmic reticulum. Its subcellular location is the host mitochondrion. In terms of biological role, major outer capsid protein involved in host cell membrane penetration. In the endocytic compartment, outer-capsid protein sigma-3 is removed by cathepsin proteases, which exposes the viral membrane-penetration protein mu-1. Both myristoylated peptides mu-1N and phi are released during infectious subvirion particles (ISVP) formation in the endosome. They associate with host membranes and mu-1N induces permeabilization and delivery of transcriptionally active viral particles into the host cell cytoplasm. Seems to induce apoptosis in the host cell. Its function is as follows. The viral outer shell polypeptides, of which mu-1 is one, impose structural constraints that prevent elongation of nascent transcripts by the RNA-dependent RNA polymerase lambda-3. The sequence is that of Outer capsid protein mu-1 (M2) from Mammalia (T3D).